We begin with the raw amino-acid sequence, 319 residues long: Curved DNA-binding protein (319 aa).

Residues 5-69 (DYYKILGVEP…QKRAEFDEIR (65 aa)) enclose the J domain.

The protein resides in the cytoplasm. It is found in the nucleoid. DNA-binding protein that preferentially recognizes a curved DNA sequence. It is probably a functional analog of DnaJ; displays overlapping activities with DnaJ, but functions under different conditions, probably acting as a molecular chaperone in an adaptive response to environmental stresses other than heat shock. Lacks autonomous chaperone activity; binds native substrates and targets them for recognition by DnaK. Its activity is inhibited by the binding of CbpM. This Pseudomonas putida (strain ATCC 47054 / DSM 6125 / CFBP 8728 / NCIMB 11950 / KT2440) protein is Curved DNA-binding protein.